Reading from the N-terminus, the 824-residue chain is Glycerol-3-phosphate acyltransferase (824 aa).

The HXXXXD motif motif lies at 302–307; the sequence is CHRSHM.

Belongs to the GPAT/DAPAT family.

The protein resides in the cell inner membrane. It catalyses the reaction sn-glycerol 3-phosphate + an acyl-CoA = a 1-acyl-sn-glycero-3-phosphate + CoA. The protein operates within phospholipid metabolism; CDP-diacylglycerol biosynthesis; CDP-diacylglycerol from sn-glycerol 3-phosphate: step 1/3. The sequence is that of Glycerol-3-phosphate acyltransferase from Actinobacillus pleuropneumoniae serotype 5b (strain L20).